The sequence spans 1585 residues: Adhesion G protein-coupled receptor B2 (1585 aa).

The first 32 residues, 1-32, serve as a signal peptide directing secretion; sequence MENTGWMGKGHRMTPACPLLLSVILSLRLATA. The Extracellular portion of the chain corresponds to 33–936; sequence FDPAPSACSA…ELAGSPSVPL (904 aa). N-linked (GlcNAc...) asparagine glycans are attached at residues N106, N191, and N192. Over residues 229-238 the composition is skewed to low complexity; the sequence is AGAGSTTTTS. The tract at residues 229 to 271 is disordered; that stretch reads AGAGSTTTTSPGPPAAHTLSNALVPGGPAPPAEADLHSGSSND. O-linked (Xyl...) (chondroitin sulfate) serine glycosylation is present at S266. TSP type-1 domains follow at residues 309–362, 364–417, 419–472, and 475–528; these read DPAA…ATCP, HGVW…AACP, EGQW…LECP, and DSKW…KRCP. Intrachain disulfides connect C321/C355, C325/C361, C336/C345, C376/C411, C380/C416, C391/C401, C431/C466, C435/C471, C446/C456, C487/C522, C491/C527, C502/C512, C534/C569, and C557/C587. Residue N356 is glycosylated (N-linked (GlcNAc...) asparagine). N437 is a glycosylation site (N-linked (GlcNAc...) asparagine). N560 and N645 each carry an N-linked (GlcNAc...) asparagine glycan. Residues 757-924 enclose the GAIN-B domain; the sequence is DRLFLPKEVL…AVLAQPPKDL (168 aa). The tract at residues 767–806 is disordered; the sequence is SLSSPGKPATSGAAGSPGRGRGPGTVPPGPGHSHQRLLPA. Positions 769 to 780 are enriched in low complexity; it reads SSPGKPATSGAA. A glycan (N-linked (GlcNAc...) asparagine) is linked at N867. 2 disulfide bridges follow: C874-C906 and C894-C908. The tract at residues 874 to 924 is GPS; sequence CASWDYSRADASSGDWDTENCQTLETQAAHTRCQCQHLSTFAVLAQPPKDL. A helical transmembrane segment spans residues 937–957; the sequence is VIGCAVSCMALLTLLAIYAAF. At 958–965 the chain is on the cytoplasmic side; sequence WRFIKSER. Residues 966 to 986 traverse the membrane as a helical segment; it reads SIILLNFCLSILASNILILVG. Residues 987–994 are Extracellular-facing; the sequence is QSRVLSKG. A helical membrane pass occupies residues 995-1015; sequence VCTMTAAFLHFFFLSSFCWVL. Residues 1016–1036 lie on the Cytoplasmic side of the membrane; that stretch reads TEAWQSYLAVIGRMRTRLVRK. The helical transmembrane segment at 1037–1057 threads the bilayer; that stretch reads RFLCLGWGLPALVVAVSVGFT. At 1058 to 1078 the chain is on the extracellular side; the sequence is RTKGYGTSSYCWLSLEGGLLY. A helical transmembrane segment spans residues 1079–1099; it reads AFVGPAAVIVLVNMLIGIIVF. Residues 1100-1121 lie on the Cytoplasmic side of the membrane; sequence NKLMARDGISDKSKKQRAGSER. A helical transmembrane segment spans residues 1122–1142; it reads CPWASLLLPCSACGAVPSPLL. Residues 1143 to 1153 are Extracellular-facing; it reads SSASARNAMAS. Residues 1154–1174 form a helical membrane-spanning segment; it reads LWSSCVVLPLLALTWMSAVLA. Over 1175–1585 the chain is Cytoplasmic; it reads MTDRRSVLFQ…PPDGDFQTEV (411 aa). Y1351 carries the phosphotyrosine modification. 3 disordered regions span residues 1359 to 1385, 1423 to 1454, and 1498 to 1585; these read LSLQ…PRRA, FQPP…GSTM, and YRSQ…QTEV. The segment covering 1372 to 1382 has biased composition (basic and acidic residues); it reads DAPRARPEGTP. Polar residues predominate over residues 1543–1552; sequence SWSTFKSMTL. A compositionally biased stretch (acidic residues) spans 1575 to 1585; the sequence is EPPDGDFQTEV.

It belongs to the G-protein coupled receptor 2 family. Adhesion G-protein coupled receptor (ADGR) subfamily. Heterodimer of 2 chains generated by proteolytic processing; the large extracellular N-terminal fragment and the membrane-bound C-terminal fragment predominantly remain associated and non-covalently linked. Interacts with GABPB2. Interacts (via carboxy-terminus) with TAX1BP3. Interacts with GNAZ. Interacts with SH3GL2. In terms of processing, glycosylated. Autoproteolytically processed at the GPS region of the GAIN-B domain; this cleavage modulates receptor activity. Additionally, furin is involved in the cleavage at another site, in the middle of the extracellular domain, generating a soluble fragment. Detected in cerebrospinal fluid (at protein level). Strongly expressed in brain. Also detected in heart, thymus, skeletal muscle, and different cell lines.

It is found in the cell membrane. The protein resides in the secreted. Its activity is regulated as follows. Receptor activity is regulated by proteolytic processing. The long N-terminal has a an inhibitory effect on the constitutive signaling activity. Removal of the N-terminal region induces an increase of the receptor activity. Its function is as follows. Orphan G-protein coupled receptor involved in cell adhesion and probably in cell-cell interactions. Activates NFAT-signaling pathway, a transcription factor, via the G-protein GNAZ. Involved in angiogenesis inhibition. The protein is Adhesion G protein-coupled receptor B2 of Homo sapiens (Human).